A 1211-amino-acid polypeptide reads, in one-letter code: Endoplasmic reticulum transmembrane helix translocase (1211 aa).

Residues 1–23 (MGSKALITSPDISSGQLYIKLPT) are Cytoplasmic-facing. Residues 24–44 (FFHLYVWPFALFVYPYIGYVY) form a helical membrane-spanning segment. Residues 45-54 (QNKLYSEEVR) are Lumenal-facing. A helical transmembrane segment spans residues 55–75 (YLTYIAVGTIHALFWLAGEWN). The Cytoplasmic segment spans residues 76–191 (TKVYCLMTCR…FDIPIPTFGT (116 aa)). The A-domain; part 1 stretch occupies residues 155-185 (TIGTLKKSTGLTNIQSEIFLYRYGKNCFDIP). The helical transmembrane segment at 192–212 (LFKEHAVAPFFVFQIFCCVLW) threads the bilayer. At 213–216 (CLDD) the chain is on the lumenal side. A helical membrane pass occupies residues 217–237 (YWYFSLFSMFMIIALECSVVW). Residues 238 to 397 (QRQRTLTEFR…EKVTANNRES (160 aa)) are Cytoplasmic-facing. The tract at residues 250 to 388 (SIKPYEIQVY…LVRTMVFSSE (139 aa)) is A-domain; part 2. A helical membrane pass occupies residues 398–418 (LYFILFLLVFAIAASGYVWHV). Residues 419–1057 (GSKTERSRYK…KERPQAGIFN (639 aa)) lie on the Lumenal side of the membrane. The segment at 464-493 (YIYCTEPFRIPLSGHLDICCFDKTGTLTEE) is P-domain; part 1. D485 serves as the catalytic 4-aspartylphosphate intermediate. Mg(2+) is bound by residues D485 and T487. ATP-binding positions include 485 to 487 (DKT), F587, R644, D710, and 824 to 828 (DGTND). The N-domain stretch occupies residues 495–685 (MVVQGIAGVN…FAGFLIFTSP (191 aa)). A P-domain; part 2 region spans residues 688 to 845 (EDARQTVQML…HVGVALLNAS (158 aa)). D824 lines the Mg(2+) pocket. The tract at residues 846–955 (EEDMLEMQER…NASDDEAPKL (110 aa)) is arm-like. Residues 956 to 971 (KLGDASVAAPFTSKLA) are P-domain; part 3. The chain crosses the membrane as a helical span at residues 1058–1078 (TYIIGSVLGQFAIHIVTLIYI). Residues 1079-1100 (TRVVYLYEDPLEKVDLEETFKP) are Cytoplasmic-facing. Residues 1101–1121 (SLLNTAIYLLQLIQQVSTFAI) traverse the membrane as a helical segment. Topologically, residues 1122–1136 (NYQGRPFREALSENK) are lumenal. The chain crosses the membrane as a helical span at residues 1137–1157 (GMYYGLLGIAFVAIAGVTEFS). The Cytoplasmic segment spans residues 1158–1174 (PELNAKLQLVKMAYNFQ). The helical transmembrane segment at 1175 to 1195 (IQLLATMVVDYAACWIIEELM) threads the bilayer. The Lumenal segment spans residues 1196–1211 (KKYFRDNKPKEIVLRN).

Belongs to the cation transport ATPase (P-type) (TC 3.A.3) family. Type V subfamily. Mg(2+) serves as cofactor.

The protein localises to the endoplasmic reticulum membrane. The catalysed reaction is [protein]-with a C-terminal TM segment(out) + ATP + H2O = [protein]-with a C-terminal TM segment(in) + ADP + phosphate + H(+). Functionally, endoplasmic reticulum translocase required to remove mitochondrial transmembrane proteins mistargeted to the endoplasmic reticulum. Acts as a dislocase that mediates the ATP-dependent extraction of mislocalized mitochondrial transmembrane proteins from the endoplasmic reticulum membrane. Specifically binds mitochondrial tail-anchored transmembrane proteins: has an atypically large substrate-binding pocket that recognizes and binds moderately hydrophobic transmembranes with short hydrophilic lumenal domains. Involved in controlling nuclear calcium ion levels. Required for cytokinesis and stabilizing microtubules. Required for assembly of the forespore membrane. Involved in calcium transport to the endoplasmic reticulum. This is Endoplasmic reticulum transmembrane helix translocase from Schizosaccharomyces pombe (strain 972 / ATCC 24843) (Fission yeast).